We begin with the raw amino-acid sequence, 276 residues long: 2-dehydro-3-deoxyphosphooctonate aldolase (276 aa).

Belongs to the KdsA family.

The protein resides in the cytoplasm. The catalysed reaction is D-arabinose 5-phosphate + phosphoenolpyruvate + H2O = 3-deoxy-alpha-D-manno-2-octulosonate-8-phosphate + phosphate. Its pathway is carbohydrate biosynthesis; 3-deoxy-D-manno-octulosonate biosynthesis; 3-deoxy-D-manno-octulosonate from D-ribulose 5-phosphate: step 2/3. It participates in bacterial outer membrane biogenesis; lipopolysaccharide biosynthesis. The chain is 2-dehydro-3-deoxyphosphooctonate aldolase from Xylella fastidiosa (strain M23).